A 441-amino-acid chain; its full sequence is Transcription factor bHLH90 (441 aa).

One can recognise a bHLH domain in the interval 260 to 309 (NFKSKNLHSERKRRERINQAMYGLRAVVPKITKLNKIGIFSDAVDYINEL).

In terms of assembly, homodimer. Expressed constitutively in roots, leaves, stems, and flowers.

Its subcellular location is the nucleus. The polypeptide is Transcription factor bHLH90 (BHLH90) (Arabidopsis thaliana (Mouse-ear cress)).